A 474-amino-acid polypeptide reads, in one-letter code: Cysteine--tRNA ligase (474 aa).

Position 29 (cysteine 29) interacts with Zn(2+). A 'HIGH' region motif is present at residues 31-41; sequence ATVQGEPHVGH. Zn(2+)-binding residues include cysteine 211, histidine 236, and glutamate 240. The short motif at 267-271 is the 'KMSKS' region element; it reads KMSKS. Lysine 270 provides a ligand contact to ATP.

The protein belongs to the class-I aminoacyl-tRNA synthetase family. As to quaternary structure, monomer. It depends on Zn(2+) as a cofactor.

The protein resides in the cytoplasm. The catalysed reaction is tRNA(Cys) + L-cysteine + ATP = L-cysteinyl-tRNA(Cys) + AMP + diphosphate. The chain is Cysteine--tRNA ligase from Beutenbergia cavernae (strain ATCC BAA-8 / DSM 12333 / CCUG 43141 / JCM 11478 / NBRC 16432 / NCIMB 13614 / HKI 0122).